Consider the following 129-residue polypeptide: Small ribosomal subunit protein uS11 (129 aa).

This sequence belongs to the universal ribosomal protein uS11 family. In terms of assembly, part of the 30S ribosomal subunit. Interacts with proteins S7 and S18. Binds to IF-3.

Located on the platform of the 30S subunit, it bridges several disparate RNA helices of the 16S rRNA. Forms part of the Shine-Dalgarno cleft in the 70S ribosome. In Lawsonia intracellularis (strain PHE/MN1-00), this protein is Small ribosomal subunit protein uS11.